The primary structure comprises 265 residues: MSHGGGGHAAELYPEEQIFAVGIALSLVGCYLANFLSPYGLGMLIGGLLASAACVAGANTVRKVAAYGLGTGVPSIGMVSLGMGTLAAVAGVLIPDYFNLPYLVAPIITLIVSAVIGYIVGRLTVNPVGMKIPIMVRSMTFLSIAGAMALLGFTVAYVGSLEPQKYIDYALNNGMMALAFIAAGMAILHPFNACLGPNESHKRTLTLAVACGFITWFVFSVVKLDIVSIIVSIILWAIVYVKFVKMSFKDACAVLHVPEIPKKEE.

The next 8 helical transmembrane spans lie at 18–38 (IFAVGIALSLVGCYLANFLSP), 41–61 (LGMLIGGLLASAACVAGANTV), 75–95 (SIGMVSLGMGTLAAVAGVLIP), 100–120 (LPYLVAPIITLIVSAVIGYIV), 141–161 (FLSIAGAMALLGFTVAYVGSL), 175–195 (MMALAFIAAGMAILHPFNACL), 202–222 (KRTLTLAVACGFITWFVFSVV), and 224–244 (LDIVSIIVSIILWAIVYVKFV).

It belongs to the MtrC family. As to quaternary structure, the complex is composed of 8 subunits; MtrA, MtrB, MtrC, MtrD, MtrE, MtrF, MtrG and MtrH.

It localises to the cell membrane. The enzyme catalyses 5-methyl-5,6,7,8-tetrahydromethanopterin + coenzyme M + 2 Na(+)(in) = 5,6,7,8-tetrahydromethanopterin + methyl-coenzyme M + 2 Na(+)(out). It functions in the pathway one-carbon metabolism; methanogenesis from CO(2); methyl-coenzyme M from 5,10-methylene-5,6,7,8-tetrahydromethanopterin: step 2/2. Functionally, part of a complex that catalyzes the formation of methyl-coenzyme M and tetrahydromethanopterin from coenzyme M and methyl-tetrahydromethanopterin. This is an energy-conserving, sodium-ion translocating step. The protein is Tetrahydromethanopterin S-methyltransferase subunit C (mtrC) of Methanocaldococcus jannaschii (strain ATCC 43067 / DSM 2661 / JAL-1 / JCM 10045 / NBRC 100440) (Methanococcus jannaschii).